The primary structure comprises 216 residues: Phosphoenolpyruvate guanylyltransferase (216 aa).

3 residues coordinate phosphoenolpyruvate: threonine 143, glycine 159, and serine 162.

This sequence belongs to the CofC family.

The enzyme catalyses phosphoenolpyruvate + GTP + H(+) = enolpyruvoyl-2-diphospho-5'-guanosine + diphosphate. The protein operates within cofactor biosynthesis; coenzyme F420 biosynthesis. Guanylyltransferase that catalyzes the activation of phosphoenolpyruvate (PEP) as enolpyruvoyl-2-diphospho-5'-guanosine, via the condensation of PEP with GTP. It is involved in the biosynthesis of coenzyme F420, a hydride carrier cofactor. In Streptomyces scabiei (strain 87.22), this protein is Phosphoenolpyruvate guanylyltransferase.